The sequence spans 181 residues: ATP-dependent protease subunit HslV (181 aa).

T7 is an active-site residue. Na(+) is bound by residues G166, C169, and T172.

It belongs to the peptidase T1B family. HslV subfamily. In terms of assembly, a double ring-shaped homohexamer of HslV is capped on each side by a ring-shaped HslU homohexamer. The assembly of the HslU/HslV complex is dependent on binding of ATP.

The protein resides in the cytoplasm. The catalysed reaction is ATP-dependent cleavage of peptide bonds with broad specificity.. Its activity is regulated as follows. Allosterically activated by HslU binding. Functionally, protease subunit of a proteasome-like degradation complex believed to be a general protein degrading machinery. The polypeptide is ATP-dependent protease subunit HslV (Delftia acidovorans (strain DSM 14801 / SPH-1)).